The chain runs to 55 residues: ATP synthase F(0) complex subunit 8 (55 aa).

A helical membrane pass occupies residues 4–24; it reads LNPHPWFSIFITSWLILIIIL.

This sequence belongs to the ATPase protein 8 family. As to quaternary structure, component of the ATP synthase complex composed at least of ATP5F1A/subunit alpha, ATP5F1B/subunit beta, ATP5MC1/subunit c (homooctomer), MT-ATP6/subunit a, MT-ATP8/subunit 8, ATP5ME/subunit e, ATP5MF/subunit f, ATP5MG/subunit g, ATP5MK/subunit k, ATP5MJ/subunit j, ATP5F1C/subunit gamma, ATP5F1D/subunit delta, ATP5F1E/subunit epsilon, ATP5PF/subunit F6, ATP5PB/subunit b, ATP5PD/subunit d, ATP5PO/subunit OSCP. ATP synthase complex consists of a soluble F(1) head domain (subunits alpha(3) and beta(3)) - the catalytic core - and a membrane F(0) domain - the membrane proton channel (subunits c, a, 8, e, f, g, k and j). These two domains are linked by a central stalk (subunits gamma, delta, and epsilon) rotating inside the F1 region and a stationary peripheral stalk (subunits F6, b, d, and OSCP).

It localises to the mitochondrion membrane. Subunit 8, of the mitochondrial membrane ATP synthase complex (F(1)F(0) ATP synthase or Complex V) that produces ATP from ADP in the presence of a proton gradient across the membrane which is generated by electron transport complexes of the respiratory chain. ATP synthase complex consist of a soluble F(1) head domain - the catalytic core - and a membrane F(1) domain - the membrane proton channel. These two domains are linked by a central stalk rotating inside the F(1) region and a stationary peripheral stalk. During catalysis, ATP synthesis in the catalytic domain of F(1) is coupled via a rotary mechanism of the central stalk subunits to proton translocation. In vivo, can only synthesize ATP although its ATP hydrolase activity can be activated artificially in vitro. Part of the complex F(0) domain. The protein is ATP synthase F(0) complex subunit 8 of Pelomedusa subrufa (African side-necked turtle).